A 124-amino-acid polypeptide reads, in one-letter code: MKRIHSLAGILLVLGLIQSSCRVLMQEADPSSSLEADSTLKDEPRELSNMKRHSEGTFSNDYSKYLEDRKAQEFVRWLMNNKRSGVAEKRHADGTFTSDVSSYLKDQAIKDFVDRLKAGQVRRE.

The signal sequence occupies residues 1–25; sequence MKRIHSLAGILLVLGLIQSSCRVLM. The disordered stretch occupies residues 28 to 54; the sequence is ADPSSSLEADSTLKDEPRELSNMKRHS. Positions 38-54 are enriched in basic and acidic residues; the sequence is STLKDEPRELSNMKRHS. Positions 84–88 are excised as a propeptide; sequence SGVAE.

This sequence belongs to the glucagon family.

It is found in the secreted. Its function is as follows. Glucagon plays a key role in glucose metabolism and homeostasis. Regulates blood glucose by increasing gluconeogenesis and decreasing glycolysis. The chain is Glucagon-1 (gcg1) from Lophius americanus (American angler).